A 306-amino-acid polypeptide reads, in one-letter code: C-type lectin domain family 10 member A (306 aa).

Residues 1–37 lie on the Cytoplasmic side of the membrane; it reads MTMAYENFQNLGSEEKNQEAGKAPPQSFLCNILSWTH. The chain crosses the membrane as a helical; Signal-anchor for type II membrane protein span at residues 38 to 58; it reads LLLFSLGLSLLLLVVISVIGS. Residues 59 to 306 are Extracellular-facing; sequence QNSQLRRDLE…VCEMKLAKDS (248 aa). N-linked (GlcNAc...) asparagine glycans are attached at residues Asn-76 and Asn-168. A C-type lectin domain is found at 174–300; the sequence is CCPLHWMEHE…QRPYRWVCEM (127 aa). Disulfide bonds link Cys-175–Cys-186, Cys-203–Cys-298, and Cys-276–Cys-290.

Homooligomer.

The protein resides in the membrane. Recognizes terminal galactose and N-acetylgalactosamine units. This Rattus norvegicus (Rat) protein is C-type lectin domain family 10 member A (Clec10a).